The following is a 288-amino-acid chain: UTP--glucose-1-phosphate uridylyltransferase (288 aa).

The protein belongs to the UDPGP type 2 family.

It carries out the reaction alpha-D-glucose 1-phosphate + UTP + H(+) = UDP-alpha-D-glucose + diphosphate. It participates in glycolipid metabolism; diglucosyl-diacylglycerol biosynthesis. In terms of biological role, catalyzes the formation of UDP-glucose from glucose-1-phosphate and UTP. This is an intermediate step in the biosynthesis of diglucosyl-diacylglycerol (Glc2-DAG), i.e. the predominant glycolipid found in the S.aureus membrane, which is also used as a membrane anchor for lipoteichoic acid (LTA). This chain is UTP--glucose-1-phosphate uridylyltransferase (gtaB), found in Staphylococcus aureus (strain bovine RF122 / ET3-1).